The following is a 453-amino-acid chain: Glutamyl-tRNA(Gln) amidotransferase subunit A (453 aa).

Active-site charge relay system residues include Lys56 and Ser131. The active-site Acyl-ester intermediate is the Ser155.

This sequence belongs to the amidase family. GatA subfamily. In terms of assembly, heterotrimer of A, B and C subunits.

The enzyme catalyses L-glutamyl-tRNA(Gln) + L-glutamine + ATP + H2O = L-glutaminyl-tRNA(Gln) + L-glutamate + ADP + phosphate + H(+). Its function is as follows. Allows the formation of correctly charged Gln-tRNA(Gln) through the transamidation of misacylated Glu-tRNA(Gln) in organisms which lack glutaminyl-tRNA synthetase. The reaction takes place in the presence of glutamine and ATP through an activated gamma-phospho-Glu-tRNA(Gln). The polypeptide is Glutamyl-tRNA(Gln) amidotransferase subunit A (Campylobacter jejuni (strain RM1221)).